Reading from the N-terminus, the 262-residue chain is Glutamate 5-kinase (262 aa).

Lys14 provides a ligand contact to ATP. Substrate-binding residues include Ser54, Asp141, and Asn153. Residues 173–174 (SD) and 214–220 (TGGMVTK) each bind ATP.

The protein belongs to the glutamate 5-kinase family.

Its subcellular location is the cytoplasm. It carries out the reaction L-glutamate + ATP = L-glutamyl 5-phosphate + ADP. It participates in amino-acid biosynthesis; L-proline biosynthesis; L-glutamate 5-semialdehyde from L-glutamate: step 1/2. In terms of biological role, catalyzes the transfer of a phosphate group to glutamate to form L-glutamate 5-phosphate. This is Glutamate 5-kinase from Symbiobacterium thermophilum (strain DSM 24528 / JCM 14929 / IAM 14863 / T).